The sequence spans 305 residues: DNA-directed RNA polymerase 35 kDa subunit (305 aa).

Belongs to the poxviridae DNA-directed RNA polymerase 35 kDa subunit family. In terms of assembly, the DNA-dependent RNA polymerase used for intermediate and late genes expression consists of eight subunits 147 kDa, 133 kDa, 35 kDa, 30 kDa, 22 kDa, 19 kDa, 18 kDa and 7 kDa totalling more than 500 kDa in mass. The same holoenzyme, with the addition of the transcription-specificity factor RAP94, is used for early gene expression.

Its subcellular location is the virion. It carries out the reaction RNA(n) + a ribonucleoside 5'-triphosphate = RNA(n+1) + diphosphate. Part of the DNA-dependent RNA polymerase which catalyzes the transcription of viral DNA into RNA using the four ribonucleoside triphosphates as substrates. Responsible for the transcription of early, intermediate and late genes. DNA-dependent RNA polymerase associates with the early transcription factor (ETF), itself composed of D6 and A7, thereby allowing the early genes transcription. Late transcription, and probably also intermediate transcription, require newly synthesized RNA polymerase. The polypeptide is DNA-directed RNA polymerase 35 kDa subunit (OPG156) (Bos taurus (Bovine)).